The primary structure comprises 332 residues: Ribosomal RNA small subunit methyltransferase C (332 aa).

This sequence belongs to the methyltransferase superfamily. RsmC family. Monomer.

It is found in the cytoplasm. It catalyses the reaction guanosine(1207) in 16S rRNA + S-adenosyl-L-methionine = N(2)-methylguanosine(1207) in 16S rRNA + S-adenosyl-L-homocysteine + H(+). Its function is as follows. Specifically methylates the guanine in position 1207 of 16S rRNA in the 30S particle. This chain is Ribosomal RNA small subunit methyltransferase C, found in Pseudomonas putida (strain ATCC 47054 / DSM 6125 / CFBP 8728 / NCIMB 11950 / KT2440).